A 389-amino-acid polypeptide reads, in one-letter code: Phosphoglycerate kinase (389 aa).

Substrate is bound by residues D21–N23, R36, H59–R62, R112, and R145. ATP contacts are provided by residues K196, E313, and G342 to T345.

Belongs to the phosphoglycerate kinase family. In terms of assembly, monomer.

It localises to the cytoplasm. It carries out the reaction (2R)-3-phosphoglycerate + ATP = (2R)-3-phospho-glyceroyl phosphate + ADP. It functions in the pathway carbohydrate degradation; glycolysis; pyruvate from D-glyceraldehyde 3-phosphate: step 2/5. The sequence is that of Phosphoglycerate kinase from Mannheimia succiniciproducens (strain KCTC 0769BP / MBEL55E).